Here is a 426-residue protein sequence, read N- to C-terminus: Monocarboxylate transporter 13 (426 aa).

The Cytoplasmic portion of the chain corresponds to Met-1–Gly-10. 12 consecutive transmembrane segments (helical) span residues Gly-11 to Leu-31, Val-52 to Ala-72, Val-83 to Leu-103, Leu-106 to Leu-126, Leu-139 to Phe-159, Leu-172 to Leu-192, Val-221 to Leu-241, Leu-244 to Val-264, Leu-283 to Ala-303, Gly-306 to Phe-326, Ile-338 to Pro-358, and Phe-374 to Phe-394. The Cytoplasmic segment spans residues Phe-395–Asp-426.

This sequence belongs to the major facilitator superfamily. Monocarboxylate porter (TC 2.A.1.13) family.

The protein resides in the golgi apparatus membrane. It localises to the cell membrane. Proton-linked monocarboxylate transporter. May catalyze the transport of monocarboxylates across the plasma membrane. The protein is Monocarboxylate transporter 13 (SLC16A13) of Bos taurus (Bovine).